We begin with the raw amino-acid sequence, 139 residues long: Large-conductance mechanosensitive channel (139 aa).

The next 2 membrane-spanning stretches (helical) occupy residues 17–37 and 88–108; these read VVDM…VTSL and TVDF…IMAA.

Belongs to the MscL family. Homopentamer.

It localises to the cell inner membrane. Its function is as follows. Channel that opens in response to stretch forces in the membrane lipid bilayer. May participate in the regulation of osmotic pressure changes within the cell. In Porphyromonas gingivalis (strain ATCC 33277 / DSM 20709 / CIP 103683 / JCM 12257 / NCTC 11834 / 2561), this protein is Large-conductance mechanosensitive channel.